The primary structure comprises 699 residues: Mannan-binding lectin serine protease 1 (699 aa).

Residues 1–19 form the signal peptide; the sequence is MRWLLLYYALCFSLSKASA. Positions 20–138 constitute a CUB 1 domain; the sequence is HTVELNNMFG…TGFDAHYMAV (119 aa). The homodimerization stretch occupies residues 20–184; it reads HTVELNNMFG…HTDNRTCRVE (165 aa). The segment at 20 to 184 is interaction with MBL2; the sequence is HTVELNNMFG…HTDNRTCRVE (165 aa). The segment at 20-278 is interaction with FCN2; the sequence is HTVELNNMFG…STQSHSVLIL (259 aa). Asn-49 carries an N-linked (GlcNAc...) asparagine glycan. The Ca(2+) site is built by Glu-68, Asp-76, Asp-121, Ser-123, Asp-139, Val-140, and Glu-142. Cys-73 and Cys-91 form a disulfide bridge. The region spanning 139 to 182 is the EGF-like; calcium-binding domain; the sequence is DVDECKEREDEELSCDHYCHNYIGGYYCSCRFGYILHTDNRTCR. Intrachain disulfides connect Cys-143/Cys-157, Cys-153/Cys-166, Cys-168/Cys-181, and Cys-185/Cys-212. Ca(2+) contacts are provided by Asn-159, Tyr-160, and Gly-163. The residue at position 159 (Asn-159) is a (3R)-3-hydroxyasparagine. N-linked (GlcNAc...) (complex) asparagine glycosylation is present at Asn-178. Positions 185–297 constitute a CUB 2 domain; that stretch reads CSDNLFTQRT…RGWRLSYRAA (113 aa). Residues Glu-235, Asp-245, Asp-282, and Ser-284 each contribute to the Ca(2+) site. Cys-242 and Cys-260 form a disulfide bridge. Sushi domains follow at residues 299–364 and 365–434; these read NECP…TCKI and VDCR…TCLP. 6 disulfides stabilise this stretch: Cys-301–Cys-349, Cys-329–Cys-362, Cys-367–Cys-414, Cys-397–Cys-432, Cys-436–Cys-572, and Cys-475–Cys-491. The N-linked (GlcNAc...) (complex) asparagine glycan is linked to Asn-385. N-linked (GlcNAc...) asparagine glycosylation is present at Asn-407. A Peptidase S1 domain is found at 449 to 696; that stretch reads IFNGRPAQKG…NKDWIQRVTG (248 aa). Residue His-490 is the Charge relay system of the active site. N-linked (GlcNAc) asparagine glycosylation is present at Leu-533. The Charge relay system role is filled by Asp-552. An N-linked (GlcNAc) asparagine glycan is attached at Glu-599. Disulfide bonds link Cys-614–Cys-631 and Cys-642–Cys-672. The active-site Charge relay system is the Ser-646.

Belongs to the peptidase S1 family. As to quaternary structure, homodimer. Interacts with the oligomeric lectins MBL2, FCN2 and FCN3; triggers the lectin pathway of complement through activation of C3. Interacts with SERPING1. Interacts with COLEC11; probably triggers the lectin pathway of complement. In terms of processing, the iron and 2-oxoglutarate dependent 3-hydroxylation of aspartate and asparagine is (R) stereospecific within EGF domains. Post-translationally, N-glycosylated. Some N-linked glycan are of the complex-type. Autoproteolytic processing of the proenzyme produces the active enzyme composed on the heavy and the light chain held together by a disulfide bond. Isoform 1 but not isoform 2 is activated through autoproteolytic processing. In terms of tissue distribution, protein of the plasma which is primarily expressed by liver.

The protein localises to the secreted. Its activity is regulated as follows. Inhibited by SERPING1 and A2M. Functions in the lectin pathway of complement, which performs a key role in innate immunity by recognizing pathogens through patterns of sugar moieties and neutralizing them. The lectin pathway is triggered upon binding of mannan-binding lectin (MBL) and ficolins to sugar moieties which leads to activation of the associated proteases MASP1 and MASP2. Functions as an endopeptidase and may activate MASP2 or C2 or directly activate C3 the key component of complement reaction. Isoform 2 may have an inhibitory effect on the activation of the lectin pathway of complement or may cleave IGFBP5. Also plays a role in development. This is Mannan-binding lectin serine protease 1 (MASP1) from Homo sapiens (Human).